The sequence spans 331 residues: Putative NAD(P)H nitroreductase acg (331 aa).

FMN is bound by residues 28–32 and Arg316; that span reads QPWRW.

It belongs to the nitroreductase family. FMN serves as cofactor.

This Mycobacterium tuberculosis (strain CDC 1551 / Oshkosh) protein is Putative NAD(P)H nitroreductase acg (acg).